The sequence spans 197 residues: MKKIAEAWPIVKGDYTVGNPESRIAVVTLASQINSLPEAALWGSSKTENLGVEKIIINTISNSNIRYILICGKESRGHLAGHSLLAIHANGIDEKGRIVGSEGAIPFIENISREAVKRFQQQVVLLDRIGLTNLEEIMKIVREYKDQGEVYPEEPLVAISQKKRQSTFTIPHSGDIIVSEEFVMDSAAGVVCTTNDF.

The protein belongs to the MtrA family. May be part of a complex composed of 3 subunits; MtxA, MtxH and MtxX.

This is Putative methyltransferase Mtx subunit A (mtxA) from Methanosarcina barkeri (strain Fusaro / DSM 804).